Reading from the N-terminus, the 278-residue chain is Shikimate dehydrogenase (NADP(+)) (278 aa).

Shikimate-binding positions include 19–21 (SFS) and Thr66. Lys70 functions as the Proton acceptor in the catalytic mechanism. Shikimate is bound by residues Asn91 and Asp106. NADP(+) is bound by residues 130–134 (GSGGA) and Leu222. Position 224 (Tyr224) interacts with shikimate. Gly245 lines the NADP(+) pocket.

This sequence belongs to the shikimate dehydrogenase family. Homodimer.

It catalyses the reaction shikimate + NADP(+) = 3-dehydroshikimate + NADPH + H(+). Its pathway is metabolic intermediate biosynthesis; chorismate biosynthesis; chorismate from D-erythrose 4-phosphate and phosphoenolpyruvate: step 4/7. Functionally, involved in the biosynthesis of the chorismate, which leads to the biosynthesis of aromatic amino acids. Catalyzes the reversible NADPH linked reduction of 3-dehydroshikimate (DHSA) to yield shikimate (SA). The chain is Shikimate dehydrogenase (NADP(+)) from Methanococcus maripaludis (strain DSM 14266 / JCM 13030 / NBRC 101832 / S2 / LL).